The sequence spans 400 residues: Subtilisin-like protease CPC735_047380 (400 aa).

An N-terminal signal peptide occupies residues methionine 1–alanine 19. A propeptide spanning residues alanine 20–phenylalanine 118 is cleaved from the precursor. The Inhibitor I9 domain occupies serine 35–arginine 116. Residues serine 128–glutamine 400 form the Peptidase S8 domain. A glycan (N-linked (GlcNAc...) asparagine) is linked at asparagine 153. Active-site charge relay system residues include aspartate 160 and histidine 191. N-linked (GlcNAc...) asparagine glycans are attached at residues asparagine 244 and asparagine 252. Serine 346 acts as the Charge relay system in catalysis. N-linked (GlcNAc...) asparagine glycosylation occurs at asparagine 396.

It belongs to the peptidase S8 family.

Its subcellular location is the secreted. In terms of biological role, secreted subtilisin-like serine protease with keratinolytic activity that contributes to pathogenicity. The polypeptide is Subtilisin-like protease CPC735_047380 (Coccidioides posadasii (strain C735) (Valley fever fungus)).